A 196-amino-acid chain; its full sequence is Dephospho-CoA kinase (196 aa).

Residues 5 to 196 (IIGLTGGIAT…QVDIALNFEL (192 aa)) form the DPCK domain. Residue 13–18 (ATGKTT) coordinates ATP.

The protein belongs to the CoaE family.

It localises to the cytoplasm. It catalyses the reaction 3'-dephospho-CoA + ATP = ADP + CoA + H(+). It participates in cofactor biosynthesis; coenzyme A biosynthesis; CoA from (R)-pantothenate: step 5/5. Functionally, catalyzes the phosphorylation of the 3'-hydroxyl group of dephosphocoenzyme A to form coenzyme A. The sequence is that of Dephospho-CoA kinase from Nostoc sp. (strain PCC 7120 / SAG 25.82 / UTEX 2576).